Consider the following 198-residue polypeptide: HTH-type transcriptional regulator BetI (198 aa).

An HTH tetR-type domain is found at 8 to 68; sequence KIRRPQLVSA…ETMRDILRQL (61 aa). The H-T-H motif DNA-binding region spans 31–50; sequence SVSLISQEAGVSSGIINHYF.

It functions in the pathway amine and polyamine biosynthesis; betaine biosynthesis via choline pathway [regulation]. In terms of biological role, repressor involved in the biosynthesis of the osmoprotectant glycine betaine. It represses transcription of the choline transporter BetT and the genes of BetAB involved in the synthesis of glycine betaine. This Vibrio vulnificus (strain YJ016) protein is HTH-type transcriptional regulator BetI.